The chain runs to 68 residues: Large ribosomal subunit protein bL31 (68 aa).

Positions 16, 18, 37, and 40 each coordinate Zn(2+).

This sequence belongs to the bacterial ribosomal protein bL31 family. Type A subfamily. Part of the 50S ribosomal subunit. Requires Zn(2+) as cofactor.

Functionally, binds the 23S rRNA. This Acidithiobacillus ferrooxidans (strain ATCC 23270 / DSM 14882 / CIP 104768 / NCIMB 8455) (Ferrobacillus ferrooxidans (strain ATCC 23270)) protein is Large ribosomal subunit protein bL31.